Consider the following 66-residue polypeptide: Large ribosomal subunit protein uL29 (66 aa).

Belongs to the universal ribosomal protein uL29 family.

In Lachnospira eligens (strain ATCC 27750 / DSM 3376 / VPI C15-48 / C15-B4) (Eubacterium eligens), this protein is Large ribosomal subunit protein uL29.